The following is a 393-amino-acid chain: 1-deoxy-D-xylulose 5-phosphate reductoisomerase (393 aa).

NADPH is bound by residues Thr10, Gly11, Ser12, Ile13, Arg37, Gln38, and Asn124. Lys125 provides a ligand contact to 1-deoxy-D-xylulose 5-phosphate. Glu126 lines the NADPH pocket. Residue Asp150 participates in Mn(2+) binding. 1-deoxy-D-xylulose 5-phosphate-binding residues include Ser151, Glu152, Ser179, and His202. Glu152 lines the Mn(2+) pocket. An NADPH-binding site is contributed by Gly208. 4 residues coordinate 1-deoxy-D-xylulose 5-phosphate: Ser215, Asn220, Lys221, and Glu224. A Mn(2+)-binding site is contributed by Glu224.

Belongs to the DXR family. The cofactor is Mg(2+). It depends on Mn(2+) as a cofactor.

The enzyme catalyses 2-C-methyl-D-erythritol 4-phosphate + NADP(+) = 1-deoxy-D-xylulose 5-phosphate + NADPH + H(+). Its pathway is isoprenoid biosynthesis; isopentenyl diphosphate biosynthesis via DXP pathway; isopentenyl diphosphate from 1-deoxy-D-xylulose 5-phosphate: step 1/6. Its function is as follows. Catalyzes the NADPH-dependent rearrangement and reduction of 1-deoxy-D-xylulose-5-phosphate (DXP) to 2-C-methyl-D-erythritol 4-phosphate (MEP). In Cupriavidus necator (strain ATCC 17699 / DSM 428 / KCTC 22496 / NCIMB 10442 / H16 / Stanier 337) (Ralstonia eutropha), this protein is 1-deoxy-D-xylulose 5-phosphate reductoisomerase.